We begin with the raw amino-acid sequence, 339 residues long: Probable long-chain-alcohol O-fatty-acyltransferase 7 (339 aa).

The next 7 helical transmembrane spans lie at S7–P27, I39–T59, H113–H133, F143–L163, M226–F246, T254–A274, and P287–F307.

This sequence belongs to the wax synthase family.

Its subcellular location is the membrane. The catalysed reaction is a long chain fatty alcohol + a fatty acyl-CoA = a wax ester + CoA. Functionally, catalyzes the final step in the synthesis of long-chain linear esters (waxes). The polypeptide is Probable long-chain-alcohol O-fatty-acyltransferase 7 (AT7) (Arabidopsis thaliana (Mouse-ear cress)).